A 376-amino-acid polypeptide reads, in one-letter code: Erythronate-4-phosphate dehydrogenase (376 aa).

The substrate site is built by S45 and T66. NAD(+)-binding positions include 126 to 127 (QV), D146, T174, 201 to 203 (ASR), and D227. R203 is a catalytic residue. Residue E232 is part of the active site. H249 functions as the Proton donor in the catalytic mechanism. An NAD(+)-binding site is contributed by G252. Y253 is a substrate binding site.

It belongs to the D-isomer specific 2-hydroxyacid dehydrogenase family. PdxB subfamily. Homodimer.

It localises to the cytoplasm. It catalyses the reaction 4-phospho-D-erythronate + NAD(+) = (R)-3-hydroxy-2-oxo-4-phosphooxybutanoate + NADH + H(+). It participates in cofactor biosynthesis; pyridoxine 5'-phosphate biosynthesis; pyridoxine 5'-phosphate from D-erythrose 4-phosphate: step 2/5. Its function is as follows. Catalyzes the oxidation of erythronate-4-phosphate to 3-hydroxy-2-oxo-4-phosphonooxybutanoate. The protein is Erythronate-4-phosphate dehydrogenase of Ectopseudomonas mendocina (strain ymp) (Pseudomonas mendocina).